The sequence spans 840 residues: 9-beta-pimara-7,15-diene synthase, chloroplastic (840 aa).

Residues 1–56 constitute a chloroplast transit peptide; sequence MASPMEAVARSSLVLAPRRRRALGLLPAAAAPFVLDCRRRHNGGMRRPHVSFACSA. Mg(2+) is bound by residues Asp589, Asp593, Asn733, Ser737, and Glu741. A DDXXD motif motif is present at residues 589-593; sequence DDFFD.

This sequence belongs to the terpene synthase family. Requires Mg(2+) as cofactor.

It is found in the plastid. The protein localises to the chloroplast. The catalysed reaction is 9alpha-copalyl diphosphate = 9beta-pimara-7,15-diene + diphosphate. Functionally, involved in the biosynthesis of momilactone A and B phytoalexins. Catalyzes the conversion of syn-copalyl diphosphate to the phytoalexin precursor syn-pimara-7,15-diene. The polypeptide is 9-beta-pimara-7,15-diene synthase, chloroplastic (Oryza sativa subsp. indica (Rice)).